We begin with the raw amino-acid sequence, 188 residues long: Elongation factor P (188 aa).

N6-(3,6-diaminohexanoyl)-5-hydroxylysine is present on Lys34.

It belongs to the elongation factor P family. May be beta-lysylated on the epsilon-amino group of Lys-34 by the combined action of EpmA and EpmB, and then hydroxylated on the C5 position of the same residue by EpmC (if this protein is present). Lysylation is critical for the stimulatory effect of EF-P on peptide-bond formation. The lysylation moiety may extend toward the peptidyltransferase center and stabilize the terminal 3-CCA end of the tRNA. Hydroxylation of the C5 position on Lys-34 may allow additional potential stabilizing hydrogen-bond interactions with the P-tRNA.

It localises to the cytoplasm. Its pathway is protein biosynthesis; polypeptide chain elongation. In terms of biological role, involved in peptide bond synthesis. Alleviates ribosome stalling that occurs when 3 or more consecutive Pro residues or the sequence PPG is present in a protein, possibly by augmenting the peptidyl transferase activity of the ribosome. Modification of Lys-34 is required for alleviation. The protein is Elongation factor P of Citrobacter koseri (strain ATCC BAA-895 / CDC 4225-83 / SGSC4696).